The sequence spans 997 residues: FHIP family protein CPIJ015043 (997 aa).

2 disordered regions span residues Asp558–Gln579 and Asn759–Ala922. Low complexity predominate over residues Gln569 to Gln579. Gly residues predominate over residues Gly763–Gly780. 2 stretches are compositionally biased toward low complexity: residues Ser781 to Pro792 and Gly830 to Ser889. Residues Ile911–Ala922 show a composition bias toward gly residues.

The protein belongs to the FHIP family.

The polypeptide is FHIP family protein CPIJ015043 (Culex quinquefasciatus (Southern house mosquito)).